We begin with the raw amino-acid sequence, 89 residues long: Small ribosomal subunit protein uS19 (89 aa).

Belongs to the universal ribosomal protein uS19 family.

In terms of biological role, protein S19 forms a complex with S13 that binds strongly to the 16S ribosomal RNA. This chain is Small ribosomal subunit protein uS19, found in Akkermansia muciniphila (strain ATCC BAA-835 / DSM 22959 / JCM 33894 / BCRC 81048 / CCUG 64013 / CIP 107961 / Muc).